Here is a 281-residue protein sequence, read N- to C-terminus: NADPH-dependent 7-cyano-7-deazaguanine reductase (281 aa).

Residue 88–90 (IES) coordinates substrate. 90–91 (SK) serves as a coordination point for NADPH. Cysteine 189 serves as the catalytic Thioimide intermediate. Residue aspartate 196 is the Proton donor of the active site. 228-229 (HE) is a substrate binding site. 257 to 258 (RG) is a binding site for NADPH.

This sequence belongs to the GTP cyclohydrolase I family. QueF type 2 subfamily. As to quaternary structure, homodimer.

The protein resides in the cytoplasm. It carries out the reaction 7-aminomethyl-7-carbaguanine + 2 NADP(+) = 7-cyano-7-deazaguanine + 2 NADPH + 3 H(+). It functions in the pathway tRNA modification; tRNA-queuosine biosynthesis. Catalyzes the NADPH-dependent reduction of 7-cyano-7-deazaguanine (preQ0) to 7-aminomethyl-7-deazaguanine (preQ1). This chain is NADPH-dependent 7-cyano-7-deazaguanine reductase, found in Sodalis glossinidius (strain morsitans).